The primary structure comprises 414 residues: Gamma-glutamyl phosphate reductase (414 aa).

Belongs to the gamma-glutamyl phosphate reductase family.

It localises to the cytoplasm. It carries out the reaction L-glutamate 5-semialdehyde + phosphate + NADP(+) = L-glutamyl 5-phosphate + NADPH + H(+). It participates in amino-acid biosynthesis; L-proline biosynthesis; L-glutamate 5-semialdehyde from L-glutamate: step 2/2. Catalyzes the NADPH-dependent reduction of L-glutamate 5-phosphate into L-glutamate 5-semialdehyde and phosphate. The product spontaneously undergoes cyclization to form 1-pyrroline-5-carboxylate. In Limosilactobacillus reuteri (strain DSM 20016) (Lactobacillus reuteri), this protein is Gamma-glutamyl phosphate reductase.